The primary structure comprises 118 residues: Ribonuclease P protein component (118 aa).

The protein belongs to the RnpA family. In terms of assembly, consists of a catalytic RNA component (M1 or rnpB) and a protein subunit.

It carries out the reaction Endonucleolytic cleavage of RNA, removing 5'-extranucleotides from tRNA precursor.. Functionally, RNaseP catalyzes the removal of the 5'-leader sequence from pre-tRNA to produce the mature 5'-terminus. It can also cleave other RNA substrates such as 4.5S RNA. The protein component plays an auxiliary but essential role in vivo by binding to the 5'-leader sequence and broadening the substrate specificity of the ribozyme. The sequence is that of Ribonuclease P protein component from Rickettsia typhi (strain ATCC VR-144 / Wilmington).